The following is a 358-amino-acid chain: Magnesium-protoporphyrin IX monomethyl ester [oxidative] cyclase (358 aa).

The protein belongs to the AcsF family. Fe cation is required as a cofactor.

It catalyses the reaction Mg-protoporphyrin IX 13-monomethyl ester + 3 NADPH + 3 O2 + 2 H(+) = 3,8-divinyl protochlorophyllide a + 3 NADP(+) + 5 H2O. The protein operates within porphyrin-containing compound metabolism; chlorophyll biosynthesis (light-independent). In terms of biological role, catalyzes the formation of the isocyclic ring in chlorophyll biosynthesis. Mediates the cyclase reaction, which results in the formation of divinylprotochlorophyllide (Pchlide) characteristic of all chlorophylls from magnesium-protoporphyrin IX 13-monomethyl ester (MgPMME). The chain is Magnesium-protoporphyrin IX monomethyl ester [oxidative] cyclase from Synechococcus elongatus (strain ATCC 33912 / PCC 7942 / FACHB-805) (Anacystis nidulans R2).